The following is a 586-amino-acid chain: Dual specificity tyrosine-phosphorylation-regulated kinase 3 (586 aa).

The segment covering 1–13 has biased composition (basic and acidic residues); sequence MGGAARERGRKDA. The disordered stretch occupies residues 1–187; sequence MGGAARERGR…QGVIGGPNNG (187 aa). In terms of domain architecture, Protein kinase spans 208–521; that stretch reads YEVLKIIGKG…PAQALRHPWI (314 aa). ATP-binding positions include 214 to 222, Lys-237, and 287 to 290; these read IGKGSFGQV and FELL. Catalysis depends on Asp-334, which acts as the Proton acceptor. Tyr-368 carries the phosphotyrosine modification. A Nuclear localization signal motif is present at residues 467-480; sequence RSRRGKKRGPPGSK.

Belongs to the protein kinase superfamily. CMGC Ser/Thr protein kinase family. MNB/DYRK subfamily. In terms of assembly, interacts with SIRT1. Mg(2+) is required as a cofactor. Post-translationally, protein kinase activity is activated following autophosphorylation at Tyr-368. In terms of processing, ubiquitinated at anaphase by the anaphase-promoting complex (APC/C), leading to its degradation by the proteasome. In terms of tissue distribution, expressed predominantly in testis. Expressed in late pachytene spermatocytes.

Its subcellular location is the nucleus. The protein resides in the cytoplasm. It is found in the nucleus speckle. It localises to the cytoplasmic granule. The protein localises to the cytoskeleton. Its subcellular location is the microtubule organizing center. The protein resides in the centrosome. The enzyme catalyses L-seryl-[protein] + ATP = O-phospho-L-seryl-[protein] + ADP + H(+). It catalyses the reaction L-threonyl-[protein] + ATP = O-phospho-L-threonyl-[protein] + ADP + H(+). It carries out the reaction L-tyrosyl-[protein] + ATP = O-phospho-L-tyrosyl-[protein] + ADP + H(+). Protein kinase activity is activated following autophosphorylation at Tyr-368. Dual-specificity protein kinase that promotes disassembly of several types of membraneless organelles during mitosis, such as stress granules, nuclear speckles and pericentriolar material. Dual-specificity tyrosine-regulated kinases (DYRKs) autophosphorylate a critical tyrosine residue in their activation loop and phosphorylate their substrate on serine and threonine residues. Acts as a central dissolvase of membraneless organelles during the G2-to-M transition, after the nuclear-envelope breakdown: acts by mediating phosphorylation of multiple serine and threonine residues in unstructured domains of proteins, such as SRRM1 and PCM1. Does not mediate disassembly of all membraneless organelles: disassembly of P-body and nucleolus is not regulated by DYRK3. Dissolution of membraneless organelles at the onset of mitosis is also required to release mitotic regulators, such as ZNF207, from liquid-unmixed organelles where they are sequestered and keep them dissolved during mitosis. Regulates mTORC1 by mediating the dissolution of stress granules: during stressful conditions, DYRK3 partitions from the cytosol to the stress granule, together with mTORC1 components, which prevents mTORC1 signaling. When stress signals are gone, the kinase activity of DYRK3 is required for the dissolution of stress granule and mTORC1 relocation to the cytosol: acts by mediating the phosphorylation of the mTORC1 inhibitor AKT1S1, allowing full reactivation of mTORC1 signaling. Also acts as a negative regulator of EPO-dependent erythropoiesis: may place an upper limit on red cell production during stress erythropoiesis. Inhibits cell death due to cytokine withdrawal in hematopoietic progenitor cells. Promotes cell survival upon genotoxic stress through phosphorylation of SIRT1: this in turn inhibits p53/TP53 activity and apoptosis. In Rattus norvegicus (Rat), this protein is Dual specificity tyrosine-phosphorylation-regulated kinase 3.